The chain runs to 1202 residues: Calmodulin-binding transcription activator 2 (1202 aa).

Residues 30–155 (RCPLLPPERL…YLNVPALEDC (126 aa)) constitute a DNA-binding region (CG-1). The short motif at 79 to 86 (RKKVKYRK) is the Nuclear localization signal element. Disordered stretches follow at residues 263–322 (SIPH…SRGG), 361–409 (GTEP…AHTP), and 421–491 (PQAA…LFGG). Over residues 270-283 (PEPPPLIAPLPPEL) the composition is skewed to pro residues. Low complexity-rich tracts occupy residues 289-299 (SPSSSSSSSSS) and 313-322 (TSRGGSSRGG). Composition is skewed to pro residues over residues 365–374 (SAPPAPPSPA) and 460–476 (PPIP…PAPL). One can recognise an IPT/TIG domain in the interval 537–615 (DFSPEWSYPE…LSASVLFEYR (79 aa)). 3 ANK repeats span residues 712 to 745 (MSLL…DLEQ), 757 to 787 (CTPL…SIPD), and 791 to 821 (RLPL…SVEP). 2 disordered regions span residues 817–874 (PSVE…ASEM) and 906–929 (PLSS…ADSP). Low complexity-rich tracts occupy residues 826 to 846 (SPPS…SELS) and 906 to 917 (PLSSLPALPPAS). 2 IQ domains span residues 1049 to 1078 (YEAA…AAVI) and 1102 to 1131 (TQAA…AVLI).

It belongs to the CAMTA family. In terms of assembly, may interact with calmodulin. Detected in brain. Expressed at constant levels throughout the cell cycle in neuroblastoma cell lines.

The protein resides in the nucleus. Its function is as follows. Transcription activator. May act as tumor suppressor. In Homo sapiens (Human), this protein is Calmodulin-binding transcription activator 2 (CAMTA2).